A 375-amino-acid chain; its full sequence is Chaperone protein DnaJ (375 aa).

Residues Asp5–Gly70 form the J domain. The CR-type zinc finger occupies Gly133–Asn211. Zn(2+)-binding residues include Cys146, Cys149, Cys163, Cys166, Cys185, Cys188, Cys199, and Cys202. 4 CXXCXGXG motif repeats span residues Cys146–Gly153, Cys163–Gly170, Cys185–Gly192, and Cys199–Gly206.

This sequence belongs to the DnaJ family. As to quaternary structure, homodimer. Requires Zn(2+) as cofactor.

The protein resides in the cytoplasm. Participates actively in the response to hyperosmotic and heat shock by preventing the aggregation of stress-denatured proteins and by disaggregating proteins, also in an autonomous, DnaK-independent fashion. Unfolded proteins bind initially to DnaJ; upon interaction with the DnaJ-bound protein, DnaK hydrolyzes its bound ATP, resulting in the formation of a stable complex. GrpE releases ADP from DnaK; ATP binding to DnaK triggers the release of the substrate protein, thus completing the reaction cycle. Several rounds of ATP-dependent interactions between DnaJ, DnaK and GrpE are required for fully efficient folding. Also involved, together with DnaK and GrpE, in the DNA replication of plasmids through activation of initiation proteins. The polypeptide is Chaperone protein DnaJ (Acidithiobacillus ferrooxidans (strain ATCC 23270 / DSM 14882 / CIP 104768 / NCIMB 8455) (Ferrobacillus ferrooxidans (strain ATCC 23270))).